Here is a 55-residue protein sequence, read N- to C-terminus: Large ribosomal subunit protein bL33 (55 aa).

In terms of processing, the protein is methylated on either Ala-2 or Lys-3.

In Rhodopseudomonas palustris (strain ATCC BAA-98 / CGA009), this protein is Large ribosomal subunit protein bL33.